Here is a 513-residue protein sequence, read N- to C-terminus: Cytochrome P450 1A2 (513 aa).

An O-linked (GlcNAc) serine glycan is attached at S68. Residue F225 participates in substrate binding. C456 is a binding site for heme.

The protein belongs to the cytochrome P450 family. In terms of assembly, interacts with PGRMC1; the interaction requires PGRMC1 homodimerization. Heme serves as cofactor. In terms of tissue distribution, found in lung and liver.

Its subcellular location is the endoplasmic reticulum membrane. It is found in the microsome membrane. It catalyses the reaction an organic molecule + reduced [NADPH--hemoprotein reductase] + O2 = an alcohol + oxidized [NADPH--hemoprotein reductase] + H2O + H(+). The enzyme catalyses 17beta-estradiol + reduced [NADPH--hemoprotein reductase] + O2 = 2-hydroxy-17beta-estradiol + oxidized [NADPH--hemoprotein reductase] + H2O + H(+). It carries out the reaction 17beta-estradiol + reduced [NADPH--hemoprotein reductase] + O2 = 4-hydroxy-17beta-estradiol + oxidized [NADPH--hemoprotein reductase] + H2O + H(+). The catalysed reaction is estrone + reduced [NADPH--hemoprotein reductase] + O2 = 2-hydroxyestrone + oxidized [NADPH--hemoprotein reductase] + H2O + H(+). It catalyses the reaction estrone + reduced [NADPH--hemoprotein reductase] + O2 = 4-hydroxyestrone + oxidized [NADPH--hemoprotein reductase] + H2O + H(+). The enzyme catalyses cholesterol + reduced [NADPH--hemoprotein reductase] + O2 = 25-hydroxycholesterol + oxidized [NADPH--hemoprotein reductase] + H2O + H(+). It carries out the reaction all-trans-retinol + reduced [NADPH--hemoprotein reductase] + O2 = all-trans-retinal + oxidized [NADPH--hemoprotein reductase] + 2 H2O + H(+). The catalysed reaction is all-trans-retinal + reduced [NADPH--hemoprotein reductase] + O2 = all-trans-retinoate + oxidized [NADPH--hemoprotein reductase] + H2O + 2 H(+). It catalyses the reaction (5Z,8Z,11Z,14Z)-eicosatetraenoate + reduced [NADPH--hemoprotein reductase] + O2 = (14R,15S)-epoxy-(5Z,8Z,11Z)-eicosatrienoate + oxidized [NADPH--hemoprotein reductase] + H2O + H(+). The enzyme catalyses (5Z,8Z,11Z,14Z)-eicosatetraenoate + reduced [NADPH--hemoprotein reductase] + O2 = (14S,15R)-epoxy-(5Z,8Z,11Z)-eicosatrienoate + oxidized [NADPH--hemoprotein reductase] + H2O + H(+). It carries out the reaction (5Z,8Z,11Z,14Z,17Z)-eicosapentaenoate + reduced [NADPH--hemoprotein reductase] + O2 = (17R,18S)-epoxy-(5Z,8Z,11Z,14Z)-eicosatetraenoate + oxidized [NADPH--hemoprotein reductase] + H2O + H(+). The catalysed reaction is (4Z,7Z,10Z,13Z,16Z,19Z)-docosahexaenoate + reduced [NADPH--hemoprotein reductase] + O2 = (19R,20S)-epoxy-(4Z,7Z,10Z,13Z,16Z)-docosapentaenoate + oxidized [NADPH--hemoprotein reductase] + H2O + H(+). It catalyses the reaction (5S)-hydroperoxy-(6E,8Z,11Z,14Z)-eicosatetraenoate = 5-oxo-(6E,8Z,11Z,14Z)-eicosatetraenoate + H2O. The enzyme catalyses (12S)-hydroperoxy-(5Z,8Z,10E,14Z)-eicosatetraenoate = 12-oxo-(5Z,8Z,10E,14Z)-eicosatetraenoate + H2O. It carries out the reaction (15S)-hydroperoxy-(5Z,8Z,11Z,13E)-eicosatetraenoate = 15-oxo-(5Z,8Z,11Z,13E)-eicosatetraenoate + H2O. The catalysed reaction is (13S)-hydroperoxy-(9Z,11E)-octadecadienoate = 13-oxo-(9Z,11E)-octadecadienoate + H2O. It catalyses the reaction (5Z,8Z,11Z,14Z)-eicosatetraenoate + reduced [NADPH--hemoprotein reductase] + O2 = 13-hydroxy-(5Z,8Z,11Z,14Z)-eicosatetraenoate + oxidized [NADPH--hemoprotein reductase] + H2O + H(+). The enzyme catalyses (5Z,8Z,11Z,14Z)-eicosatetraenoate + reduced [NADPH--hemoprotein reductase] + O2 = 19-hydroxy-(5Z,8Z,11Z,14Z)-eicosatetraenoate + oxidized [NADPH--hemoprotein reductase] + H2O + H(+). It carries out the reaction (9Z,12Z)-octadecadienoate + reduced [NADPH--hemoprotein reductase] + O2 = 11-hydroxy-(9Z,12Z)-octadecadienoate + oxidized [NADPH--hemoprotein reductase] + H2O + H(+). It participates in cofactor metabolism; retinol metabolism. The protein operates within steroid metabolism; cholesterol metabolism. It functions in the pathway lipid metabolism; arachidonate metabolism. A cytochrome P450 monooxygenase involved in the metabolism of various endogenous substrates, including fatty acids, steroid hormones and vitamins. Mechanistically, uses molecular oxygen inserting one oxygen atom into a substrate, and reducing the second into a water molecule, with two electrons provided by NADPH via cytochrome P450 reductase (NADPH--hemoprotein reductase). Catalyzes the hydroxylation of carbon-hydrogen bonds. Exhibits high catalytic activity for the formation of hydroxyestrogens from estrone (E1) and 17beta-estradiol (E2), namely 2-hydroxy E1 and E2. Metabolizes cholesterol toward 25-hydroxycholesterol, a physiological regulator of cellular cholesterol homeostasis. May act as a major enzyme for all-trans retinoic acid biosynthesis in the liver. Catalyzes two successive oxidative transformation of all-trans retinol to all-trans retinal and then to the active form all-trans retinoic acid. Primarily catalyzes stereoselective epoxidation of the last double bond of polyunsaturated fatty acids (PUFA), displaying a strong preference for the (R,S) stereoisomer. Catalyzes bisallylic hydroxylation and omega-1 hydroxylation of PUFA. May also participate in eicosanoids metabolism by converting hydroperoxide species into oxo metabolites (lipoxygenase-like reaction, NADPH-independent). Plays a role in the oxidative metabolism of xenobiotics. Catalyzes the N-hydroxylation of heterocyclic amines and the O-deethylation of phenacetin. Metabolizes caffeine via N3-demethylation. This Mesocricetus auratus (Golden hamster) protein is Cytochrome P450 1A2 (CYP1A2).